Reading from the N-terminus, the 262-residue chain is Acyl-[acyl-carrier-protein]--UDP-N-acetylglucosamine O-acyltransferase (262 aa).

It belongs to the transferase hexapeptide repeat family. LpxA subfamily. In terms of assembly, homotrimer.

The protein localises to the cytoplasm. It catalyses the reaction a (3R)-hydroxyacyl-[ACP] + UDP-N-acetyl-alpha-D-glucosamine = a UDP-3-O-[(3R)-3-hydroxyacyl]-N-acetyl-alpha-D-glucosamine + holo-[ACP]. It participates in glycolipid biosynthesis; lipid IV(A) biosynthesis; lipid IV(A) from (3R)-3-hydroxytetradecanoyl-[acyl-carrier-protein] and UDP-N-acetyl-alpha-D-glucosamine: step 1/6. In terms of biological role, involved in the biosynthesis of lipid A, a phosphorylated glycolipid that anchors the lipopolysaccharide to the outer membrane of the cell. This Psychromonas ingrahamii (strain DSM 17664 / CCUG 51855 / 37) protein is Acyl-[acyl-carrier-protein]--UDP-N-acetylglucosamine O-acyltransferase.